Here is a 406-residue protein sequence, read N- to C-terminus: Cysteine desulfurase (406 aa).

Residue Lys226 is modified to N6-(pyridoxal phosphate)lysine. Cys364 functions as the Cysteine persulfide intermediate in the catalytic mechanism.

This sequence belongs to the class-V pyridoxal-phosphate-dependent aminotransferase family. Csd subfamily. As to quaternary structure, homodimer. Interacts with SufE and the SufBCD complex composed of SufB, SufC and SufD. The interaction with SufE is required to mediate the direct transfer of the sulfur atom from the S-sulfanylcysteine. The cofactor is pyridoxal 5'-phosphate.

The protein resides in the cytoplasm. It carries out the reaction (sulfur carrier)-H + L-cysteine = (sulfur carrier)-SH + L-alanine. It catalyses the reaction L-selenocysteine + AH2 = hydrogenselenide + L-alanine + A + H(+). Its pathway is cofactor biosynthesis; iron-sulfur cluster biosynthesis. In terms of biological role, cysteine desulfurases mobilize the sulfur from L-cysteine to yield L-alanine, an essential step in sulfur metabolism for biosynthesis of a variety of sulfur-containing biomolecules. Component of the suf operon, which is activated and required under specific conditions such as oxidative stress and iron limitation. Acts as a potent selenocysteine lyase in vitro, that mobilizes selenium from L-selenocysteine. Selenocysteine lyase activity is however unsure in vivo. This is Cysteine desulfurase from Salmonella dublin (strain CT_02021853).